We begin with the raw amino-acid sequence, 206 residues long: Ion-translocating oxidoreductase complex subunit G (206 aa).

The helical transmembrane segment at 9-29 (GITLALFAAGSTGLTAVINQM) threads the bilayer. An FMN phosphoryl threonine modification is found at Thr174.

It belongs to the RnfG family. As to quaternary structure, the complex is composed of six subunits: RsxA, RsxB, RsxC, RsxD, RsxE and RsxG. FMN is required as a cofactor.

Its subcellular location is the cell inner membrane. Functionally, part of a membrane-bound complex that couples electron transfer with translocation of ions across the membrane. Required to maintain the reduced state of SoxR. The protein is Ion-translocating oxidoreductase complex subunit G of Salmonella typhimurium (strain LT2 / SGSC1412 / ATCC 700720).